Here is a 607-residue protein sequence, read N- to C-terminus: Dolichyl-diphosphooligosaccharide--protein glycosyltransferase subunit 1 (607 aa).

The signal sequence occupies residues 1 to 23 (MEAPAARLFLLLLLGTWAPAPGS). The Lumenal portion of the chain corresponds to 24 to 434 (ASSEAPPLIN…VVHYTFNKVL (411 aa)). N6-acetyllysine is present on Lys187. N-linked (GlcNAc...) asparagine glycosylation is present at Asn299. Residues 435–455 (MLQEPLLVVAAFYILFFTVII) form a helical membrane-spanning segment. The Cytoplasmic segment spans residues 456 to 607 (YVRLDFSITK…TKIDHILDAL (152 aa)). Lys538 bears the N6-acetyllysine; alternate mark. Lys538 participates in a covalent cross-link: Glycyl lysine isopeptide (Lys-Gly) (interchain with G-Cter in SUMO2); alternate.

The protein belongs to the OST1 family. Component of the oligosaccharyltransferase (OST) complex. OST exists in two different complex forms which contain common core subunits RPN1, RPN2, OST48, OST4, DAD1 and TMEM258, either STT3A or STT3B as catalytic subunits, and form-specific accessory subunits. STT3A complex assembly occurs through the formation of 3 subcomplexes. Subcomplex 1 contains RPN1 and TMEM258, subcomplex 2 contains the STT3A-specific subunits STT3A, DC2/OSTC, and KCP2 as well as the core subunit OST4, and subcomplex 3 contains RPN2, DAD1, and OST48. The STT3A complex can form stable complexes with the Sec61 complex or with both the Sec61 and TRAP complexes. Interacts with TMEM35A/NACHO. Ubiquitinated by the ECS(ASB11) complex. In terms of processing, ufmylated by UFL1 in response to endoplasmic reticulum stress, promoting reticulophagy of endoplasmic reticulum sheets.

It localises to the endoplasmic reticulum membrane. Its pathway is protein modification; protein glycosylation. Subunit of the oligosaccharyl transferase (OST) complex that catalyzes the initial transfer of a defined glycan (Glc(3)Man(9)GlcNAc(2) in eukaryotes) from the lipid carrier dolichol-pyrophosphate to an asparagine residue within an Asn-X-Ser/Thr consensus motif in nascent polypeptide chains, the first step in protein N-glycosylation. N-glycosylation occurs cotranslationally and the complex associates with the Sec61 complex at the channel-forming translocon complex that mediates protein translocation across the endoplasmic reticulum (ER). All subunits are required for a maximal enzyme activity. The protein is Dolichyl-diphosphooligosaccharide--protein glycosyltransferase subunit 1 of Pongo abelii (Sumatran orangutan).